Consider the following 183-residue polypeptide: ATP-dependent protease subunit HslV (183 aa).

The active site involves T2. G157, C160, and T163 together coordinate Na(+).

It belongs to the peptidase T1B family. HslV subfamily. As to quaternary structure, a double ring-shaped homohexamer of HslV is capped on each side by a ring-shaped HslU homohexamer. The assembly of the HslU/HslV complex is dependent on binding of ATP.

The protein resides in the cytoplasm. The enzyme catalyses ATP-dependent cleavage of peptide bonds with broad specificity.. Its activity is regulated as follows. Allosterically activated by HslU binding. In terms of biological role, protease subunit of a proteasome-like degradation complex believed to be a general protein degrading machinery. This is ATP-dependent protease subunit HslV from Vibrio campbellii (strain ATCC BAA-1116).